Reading from the N-terminus, the 196-residue chain is Small ribosomal subunit protein uS4c (196 aa).

Positions 15–42 (LGALPGLTRKTPKSGSNQKKKFNSGKKE) are disordered. One can recognise an S4 RNA-binding domain in the interval 89–150 (MRLDNILFRL…NQRSKRLVQN (62 aa)).

The protein belongs to the universal ribosomal protein uS4 family. Part of the 30S ribosomal subunit. Contacts protein S5. The interaction surface between S4 and S5 is involved in control of translational fidelity.

The protein localises to the plastid. Its subcellular location is the chloroplast. In terms of biological role, one of the primary rRNA binding proteins, it binds directly to 16S rRNA where it nucleates assembly of the body of the 30S subunit. With S5 and S12 plays an important role in translational accuracy. This Cenchrus longisetus (Feathertop) protein is Small ribosomal subunit protein uS4c (rps4).